The chain runs to 154 residues: Ribosomal RNA-processing protein 14-N (154 aa).

Residues Trp-36–Phe-154 form a disordered region. A Phosphoserine modification is found at Ser-80. Thr-83 carries the phosphothreonine modification. Residues Gln-105–Gln-133 are compositionally biased toward basic and acidic residues. A compositionally biased stretch (basic residues) spans Lys-140–Phe-154.

Belongs to the SURF6 family.

It localises to the nucleus. Its subcellular location is the nucleolus. Functionally, involved in ribosome biogenesis and cell polarity. Required for the synthesis of both 40S and 60S ribosomal subunits and may also play some direct role in correct positioning of the mitotic spindle during mitosis. In Schizosaccharomyces pombe (strain 972 / ATCC 24843) (Fission yeast), this protein is Ribosomal RNA-processing protein 14-N (rrp14n).